Reading from the N-terminus, the 436-residue chain is MSRSRHVGKIRKRLEDVKNQWTRPARADFSDNESARLATDALLDGGPEAYWRALSQEGEVDFLSSAEAQYIQAQAKEPPDAPDSAGGAESGPRGLDSCSLQSGTYFPVASEGSEPALLHTWTLAEKPYLKEKSSATIYFQMDKHNNIRDLVRRCISRASQVLAILMDVFTDVEILCDILEAANKRGVFVCVLLDQGGVKLFQEMCDKVQISDIHLKNISIRSVEGEVYCAKSGRKFAGQIQEKFIISDWRFVLSGSYSFSWLCGHVHRNILSKFTGQAVELFDEEFRRLYASSKPLMGLKSPRLVAPFQPNKGPEAPNGRLSGTSDSASDRTSSNPFSSLSTGSNAHNQSLSTSSGPSSPLAPIPPTVPRLQPYHSTRRAVAPQPLLVPMRPHEGAPAPYSSLMAYRPTRLQLQQLGLVPRVTHPWRPFLQALPHF.

The DUF1669 stretch occupies residues 1–298 (MSRSRHVGKI…LYASSKPLMG (298 aa)). A disordered region spans residues 73–95 (AQAKEPPDAPDSAGGAESGPRGL). Phosphoserine occurs at positions 301, 329, 350, and 359. A disordered region spans residues 302-371 (PRLVAPFQPN…APIPPTVPRL (70 aa)). A compositionally biased stretch (polar residues) spans 321-349 (LSGTSDSASDRTSSNPFSSLSTGSNAHNQ). A compositionally biased stretch (low complexity) spans 350 to 359 (SLSTSSGPSS).

It belongs to the FAM83 family. As to quaternary structure, directly interacts (via DUF1669) with casein kinase isoforms CSNK1A1, CSNK1A1L, CSNK1D and CSNK1E. In terms of processing, may be phosphorylated upon EGFR activation. As to expression, widely expressed, with relatively higher expression levels in adipose tissues, especially in epididymal and inguinal white adipose tissue (at protein level).

Its subcellular location is the cytoplasm. The protein localises to the mitochondrion. Its function is as follows. Involved in mitochondrial maintenance during adipogenesis. May be acting by playing a role in the maintenance of normal mitochondrial function. The sequence is that of Protein FAM83A from Mus musculus (Mouse).